We begin with the raw amino-acid sequence, 92 residues long: Acylphosphatase (92 aa).

One can recognise an Acylphosphatase-like domain in the interval 6–92 (RMYVIVYGIV…TGEFASFDTY (87 aa)). Residues arginine 21 and asparagine 39 contribute to the active site.

This sequence belongs to the acylphosphatase family.

The catalysed reaction is an acyl phosphate + H2O = a carboxylate + phosphate + H(+). The sequence is that of Acylphosphatase (acyP) from Sulfolobus acidocaldarius (strain ATCC 33909 / DSM 639 / JCM 8929 / NBRC 15157 / NCIMB 11770).